The primary structure comprises 255 residues: 7alpha-hydroxysteroid dehydrogenase (255 aa).

NAD(+) is bound by residues isoleucine 23, aspartate 42 to isoleucine 43, aspartate 68 to isoleucine 69, and asparagine 95. Residues glycine 99, serine 146, asparagine 151, and tyrosine 159 each contribute to the glycochenodeoxycholate site. Residues tyrosine 159, lysine 163, and isoleucine 192–threonine 194 contribute to the NAD(+) site. Tyrosine 159 functions as the Proton acceptor in the catalytic mechanism.

This sequence belongs to the short-chain dehydrogenases/reductases (SDR) family. Homotetramer.

It catalyses the reaction cholate + NAD(+) = 3alpha,12alpha-dihydroxy-7-oxo-5beta-cholanate + NADH + H(+). The enzyme catalyses chenodeoxycholate + NAD(+) = 7-oxolithocholate + NADH + H(+). It carries out the reaction taurochenodeoxycholate + NAD(+) = 7-oxotaurolithocholate + NADH + H(+). The catalysed reaction is taurocholate + NAD(+) = 7-oxo-taurodeoxycholate + NADH + H(+). It catalyses the reaction glycocholate + NAD(+) = 7-oxo-glycodeoxycholate + NADH + H(+). The enzyme catalyses glycochenodeoxycholate + NAD(+) = 7-oxoglycolithocholate + NADH + H(+). Functionally, 7alpha-hydroxysteroid dehydrogenase involved in the metabolism of bile acids. Catalyzes the NAD(+)-dependent oxidation of the 7alpha-hydroxy group of 7alpha-hydroxysteroids, such as the major human bile acids cholate and chenodeoxycholate, to the corresponding 7-oxosteroids. To a lesser extent, can also act on taurochenodeoxycholate, taurocholate and glycocholate. Can also use glycochenodeoxycholate as substrate. Is not able to use NADP(+) instead of NAD(+) as the electron acceptor. The protein is 7alpha-hydroxysteroid dehydrogenase (hdhA) of Escherichia coli O157:H7.